A 938-amino-acid polypeptide reads, in one-letter code: Isoleucine--tRNA ligase (938 aa).

Positions 58–68 (PYANGSIHIGH) match the 'HIGH' region motif. Residue Lys-183 is modified to N6-acetyllysine. Position 561 (Glu-561) interacts with L-isoleucyl-5'-AMP. The 'KMSKS' region signature appears at 602–606 (KMSKS). Lys-605 contributes to the ATP binding site. The Zn(2+) site is built by Cys-901, Cys-904, Cys-921, and Cys-924.

This sequence belongs to the class-I aminoacyl-tRNA synthetase family. IleS type 1 subfamily. Monomer. Requires Zn(2+) as cofactor.

The protein localises to the cytoplasm. It catalyses the reaction tRNA(Ile) + L-isoleucine + ATP = L-isoleucyl-tRNA(Ile) + AMP + diphosphate. Its function is as follows. Catalyzes the attachment of isoleucine to tRNA(Ile). As IleRS can inadvertently accommodate and process structurally similar amino acids such as valine, to avoid such errors it has two additional distinct tRNA(Ile)-dependent editing activities. One activity is designated as 'pretransfer' editing and involves the hydrolysis of activated Val-AMP. The other activity is designated 'posttransfer' editing and involves deacylation of mischarged Val-tRNA(Ile). This is Isoleucine--tRNA ligase from Shigella flexneri.